A 948-amino-acid chain; its full sequence is Probable disease resistance protein At5g47260 (948 aa).

Residues 20–57 (RKYLYNLERNLEALHKVMQDLNAMRNDLLKRLSKEEEI) are a coiled coil. The NB-ARC domain maps to 134–432 (HRALPPLVIK…CEGILAKEDR (299 aa)). Position 176 to 183 (176 to 183 (GRGGVGKT)) interacts with ATP. 9 LRR repeats span residues 498–519 (MIRR…PQCS), 520–542 (ELTT…FFQW), 545–567 (GLVV…VSSL), 569–591 (LLRF…KELK), 592–614 (SLIH…ASLL), 615–636 (NLQV…EDIQ), 640–661 (SLKE…LSIQ), 666–686 (SIRR…LSLN), and 690–711 (SLCE…WRCT).

It belongs to the disease resistance NB-LRR family.

Its function is as follows. Potential disease resistance protein. The sequence is that of Probable disease resistance protein At5g47260 from Arabidopsis thaliana (Mouse-ear cress).